Consider the following 84-residue polypeptide: Large ribosomal subunit protein eL34 (84 aa).

This sequence belongs to the eukaryotic ribosomal protein eL34 family.

The protein is Large ribosomal subunit protein eL34 (ribL34e) of Pyrobaculum aerophilum (strain ATCC 51768 / DSM 7523 / JCM 9630 / CIP 104966 / NBRC 100827 / IM2).